We begin with the raw amino-acid sequence, 307 residues long: Elongation factor Ts (307 aa).

An involved in Mg(2+) ion dislocation from EF-Tu region spans residues 79-82 (TDFV).

It belongs to the EF-Ts family.

Its subcellular location is the cytoplasm. In terms of biological role, associates with the EF-Tu.GDP complex and induces the exchange of GDP to GTP. It remains bound to the aminoacyl-tRNA.EF-Tu.GTP complex up to the GTP hydrolysis stage on the ribosome. The protein is Elongation factor Ts of Bartonella henselae (strain ATCC 49882 / DSM 28221 / CCUG 30454 / Houston 1) (Rochalimaea henselae).